A 364-amino-acid polypeptide reads, in one-letter code: Chorismate synthase (364 aa).

Arg47 is an NADP(+) binding site. Residues 124–126 (RAS), Gly287, 302–306 (KPTAT), and Arg328 each bind FMN.

It belongs to the chorismate synthase family. Homotetramer. Requires FMNH2 as cofactor.

It catalyses the reaction 5-O-(1-carboxyvinyl)-3-phosphoshikimate = chorismate + phosphate. The protein operates within metabolic intermediate biosynthesis; chorismate biosynthesis; chorismate from D-erythrose 4-phosphate and phosphoenolpyruvate: step 7/7. In terms of biological role, catalyzes the anti-1,4-elimination of the C-3 phosphate and the C-6 proR hydrogen from 5-enolpyruvylshikimate-3-phosphate (EPSP) to yield chorismate, which is the branch point compound that serves as the starting substrate for the three terminal pathways of aromatic amino acid biosynthesis. This reaction introduces a second double bond into the aromatic ring system. This chain is Chorismate synthase, found in Prochlorococcus marinus (strain MIT 9515).